The chain runs to 200 residues: uncharacterized protein (200 aa).

2 stretches are compositionally biased toward low complexity: residues 1 to 13 (MTSAETASRAAES) and 28 to 44 (PSPAAPSRPGAPAAGPR). Disordered regions lie at residues 1–116 (MTSA…GGPG) and 137–200 (LPRD…SSFF). Positions 88–102 (RCGRPRRRDPRRRRT) are enriched in basic residues. Positions 189-200 (PSSSSGLLSSFF) are enriched in low complexity.

This is an uncharacterized protein from Homo sapiens (Human).